Reading from the N-terminus, the 493-residue chain is Probable UTP--glucose-1-phosphate uridylyltransferase (493 aa).

UTP is bound by residues Leu-105 to Lys-108, Gln-181, Gly-211, and Asp-242. A substrate-binding site is contributed by Gly-107 to Lys-108. Position 240-242 (Asn-240–Asp-242) interacts with substrate.

It belongs to the UDPGP type 1 family.

The catalysed reaction is alpha-D-glucose 1-phosphate + UTP + H(+) = UDP-alpha-D-glucose + diphosphate. Plays a central role as a glucosyl donor in cellular metabolic pathways. This is Probable UTP--glucose-1-phosphate uridylyltransferase from Saccharomyces cerevisiae (strain ATCC 204508 / S288c) (Baker's yeast).